Reading from the N-terminus, the 393-residue chain is 1-deoxy-D-xylulose 5-phosphate reductoisomerase (393 aa).

Threonine 10, glycine 11, serine 12, isoleucine 13, arginine 37, glutamine 38, and asparagine 124 together coordinate NADPH. Lysine 125 serves as a coordination point for 1-deoxy-D-xylulose 5-phosphate. NADPH is bound at residue glutamate 126. Residue aspartate 150 participates in Mn(2+) binding. Residues serine 151, glutamate 152, serine 179, and histidine 202 each coordinate 1-deoxy-D-xylulose 5-phosphate. Glutamate 152 is a binding site for Mn(2+). NADPH is bound at residue glycine 208. 1-deoxy-D-xylulose 5-phosphate contacts are provided by serine 215, asparagine 220, lysine 221, and glutamate 224. Glutamate 224 contributes to the Mn(2+) binding site.

This sequence belongs to the DXR family. Mg(2+) is required as a cofactor. It depends on Mn(2+) as a cofactor.

It carries out the reaction 2-C-methyl-D-erythritol 4-phosphate + NADP(+) = 1-deoxy-D-xylulose 5-phosphate + NADPH + H(+). It participates in isoprenoid biosynthesis; isopentenyl diphosphate biosynthesis via DXP pathway; isopentenyl diphosphate from 1-deoxy-D-xylulose 5-phosphate: step 1/6. Functionally, catalyzes the NADPH-dependent rearrangement and reduction of 1-deoxy-D-xylulose-5-phosphate (DXP) to 2-C-methyl-D-erythritol 4-phosphate (MEP). This chain is 1-deoxy-D-xylulose 5-phosphate reductoisomerase, found in Cupriavidus necator (strain ATCC 17699 / DSM 428 / KCTC 22496 / NCIMB 10442 / H16 / Stanier 337) (Ralstonia eutropha).